A 506-amino-acid chain; its full sequence is GPI mannosyltransferase 3 (506 aa).

Asn115 carries an N-linked (GlcNAc...) asparagine glycan. 6 helical membrane passes run 180-200, 229-249, 257-277, 285-305, 330-350, and 358-378; these read AFAC…LLFW, YGRL…NIIA, FVFP…SSLY, YLSQ…LLTM, FVYP…SSFS, and FFFL…RFHQ. A glycan (N-linked (GlcNAc...) asparagine) is linked at Asn395.

It belongs to the glycosyltransferase 22 family. PIGB subfamily.

The protein localises to the endoplasmic reticulum membrane. It functions in the pathway glycolipid biosynthesis; glycosylphosphatidylinositol-anchor biosynthesis. In terms of biological role, mannosyltransferase involved in glycosylphosphatidylinositol-anchor biosynthesis. Transfers the third mannose to Man2-GlcN-acyl-PI during GPI precursor assembly. This Schizosaccharomyces pombe (strain 972 / ATCC 24843) (Fission yeast) protein is GPI mannosyltransferase 3 (gpi10).